Consider the following 67-residue polypeptide: Alpha-conotoxin-like Qc1.1a (67 aa).

The first 21 residues, 1-21, serve as a signal peptide directing secretion; sequence MGMRMMFTMFLLVVLAITVVS. A propeptide spanning residues 22–46 is cleaved from the precursor; the sequence is FTSDHASDGRNTAANDKASNLMALR. 2 disulfides stabilise this stretch: Cys49/Cys55 and Cys50/Cys63. A lacks the Ser-Xaa-Pro motif that is crucial for potent interaction with nAChR region spans residues 51-53; sequence PDP.

The protein belongs to the conotoxin A superfamily. As to expression, expressed by the venom duct.

The protein localises to the secreted. Alpha-conotoxins act on postsynaptic membranes, they bind to the nicotinic acetylcholine receptors (nAChR) and thus inhibit them. Has possibly a distinct nAChR binding mode from other alpha-conotoxins, due to a different three residue motif (lacks the Ser-Xaa-Pro motif). The polypeptide is Alpha-conotoxin-like Qc1.1a (Conus quercinus (Oak cone)).